The chain runs to 470 residues: Methylenetetrahydrofolate--tRNA-(uracil-5-)-methyltransferase TrmFO (470 aa).

10–15 (GAGLAG) is an FAD binding site.

Belongs to the MnmG family. TrmFO subfamily. The cofactor is FAD.

Its subcellular location is the cytoplasm. It carries out the reaction uridine(54) in tRNA + (6R)-5,10-methylene-5,6,7,8-tetrahydrofolate + NADH + H(+) = 5-methyluridine(54) in tRNA + (6S)-5,6,7,8-tetrahydrofolate + NAD(+). The enzyme catalyses uridine(54) in tRNA + (6R)-5,10-methylene-5,6,7,8-tetrahydrofolate + NADPH + H(+) = 5-methyluridine(54) in tRNA + (6S)-5,6,7,8-tetrahydrofolate + NADP(+). Functionally, catalyzes the folate-dependent formation of 5-methyl-uridine at position 54 (M-5-U54) in all tRNAs. The chain is Methylenetetrahydrofolate--tRNA-(uracil-5-)-methyltransferase TrmFO from Prochlorococcus marinus (strain MIT 9312).